A 569-amino-acid polypeptide reads, in one-letter code: Oxygen-dependent choline dehydrogenase (569 aa).

9-38 (DYVIIGGGSAGSVLGNRLSEDKDKEVLVLE) is a binding site for FAD. The active-site Proton acceptor is the His-475.

Belongs to the GMC oxidoreductase family. FAD is required as a cofactor.

The enzyme catalyses choline + A = betaine aldehyde + AH2. It carries out the reaction betaine aldehyde + NAD(+) + H2O = glycine betaine + NADH + 2 H(+). It participates in amine and polyamine biosynthesis; betaine biosynthesis via choline pathway; betaine aldehyde from choline (cytochrome c reductase route): step 1/1. Involved in the biosynthesis of the osmoprotectant glycine betaine. Catalyzes the oxidation of choline to betaine aldehyde and betaine aldehyde to glycine betaine at the same rate. The chain is Oxygen-dependent choline dehydrogenase from Staphylococcus aureus (strain COL).